The chain runs to 291 residues: 2-C-methyl-D-erythritol 4-phosphate cytidylyltransferase (291 aa).

A disordered region spans residues 1–23; the sequence is MTERDFDTPVETPTVQPAPAQGT.

Belongs to the IspD/TarI cytidylyltransferase family. IspD subfamily.

The enzyme catalyses 2-C-methyl-D-erythritol 4-phosphate + CTP + H(+) = 4-CDP-2-C-methyl-D-erythritol + diphosphate. It functions in the pathway isoprenoid biosynthesis; isopentenyl diphosphate biosynthesis via DXP pathway; isopentenyl diphosphate from 1-deoxy-D-xylulose 5-phosphate: step 2/6. Its function is as follows. Catalyzes the formation of 4-diphosphocytidyl-2-C-methyl-D-erythritol from CTP and 2-C-methyl-D-erythritol 4-phosphate (MEP). This Bifidobacterium longum subsp. infantis (strain ATCC 15697 / DSM 20088 / JCM 1222 / NCTC 11817 / S12) protein is 2-C-methyl-D-erythritol 4-phosphate cytidylyltransferase.